The primary structure comprises 169 residues: MANRQKMSKTRDKKPDWQERVVQIRRVSKVVKGGKKLSFRAIVVIGNERGQVGVGIGKASDVINAVKKAAADGKKHVVEVPLTRSNSIPHPIDGIGGAARVIMRPSAEGTGVIAGGAVRTVLELAGVRNILAKQLGSNNPLNNARAAMNALSRLKTFSQFAKDRGVIAE.

Positions 17-80 constitute an S5 DRBM domain; it reads WQERVVQIRR…ADGKKHVVEV (64 aa).

It belongs to the universal ribosomal protein uS5 family. In terms of assembly, part of the 30S ribosomal subunit. Contacts protein S4.

Its subcellular location is the plastid. The protein resides in the cyanelle. Functionally, with S4 and S12 plays an important role in translational accuracy. In Cyanophora paradoxa, this protein is Small ribosomal subunit protein uS5c (rps5).